The sequence spans 448 residues: U-box domain-containing protein 30 (448 aa).

The 75-residue stretch at 63–137 (DIPSVFICPI…YTWFSQKYVL (75 aa)) folds into the U-box domain. 2 ARM repeats span residues 179–219 (LMAR…SLDL) and 221–260 (SDSK…GLVE).

The enzyme catalyses S-ubiquitinyl-[E2 ubiquitin-conjugating enzyme]-L-cysteine + [acceptor protein]-L-lysine = [E2 ubiquitin-conjugating enzyme]-L-cysteine + N(6)-ubiquitinyl-[acceptor protein]-L-lysine.. It participates in protein modification; protein ubiquitination. Functions as an E3 ubiquitin ligase. This is U-box domain-containing protein 30 (PUB30) from Arabidopsis thaliana (Mouse-ear cress).